Consider the following 243-residue polypeptide: Probable phosphatase CBO3379/CLC_3322 (243 aa).

Zn(2+) is bound by residues histidine 8, histidine 10, histidine 16, histidine 41, glutamate 74, histidine 102, histidine 132, aspartate 192, and histidine 194.

Belongs to the PHP family. The cofactor is Zn(2+).

The sequence is that of Probable phosphatase CBO3379/CLC_3322 from Clostridium botulinum (strain Hall / ATCC 3502 / NCTC 13319 / Type A).